The chain runs to 158 residues: UPF0225 protein Pput_1155 (158 aa).

Belongs to the UPF0225 family.

The chain is UPF0225 protein Pput_1155 from Pseudomonas putida (strain ATCC 700007 / DSM 6899 / JCM 31910 / BCRC 17059 / LMG 24140 / F1).